The chain runs to 256 residues: Cytoplasmic envelopment protein 1 (256 aa).

This sequence belongs to the herpesviridae cytoplasmic envelopment protein 1 family.

It localises to the virion. It is found in the virion tegument. The protein resides in the host cytoplasm. Its subcellular location is the host Golgi apparatus. Plays a critical role in cytoplasmic virus egress. Participates in the final step of tegumentation and envelope acquisition within the host cytoplasm. The protein is Cytoplasmic envelopment protein 1 (U75) of Homo sapiens (Human).